Consider the following 410-residue polypeptide: Multidrug resistance protein MdtM (410 aa).

Topologically, residues 1-11 (MPRFFARHAAT) are cytoplasmic. A helical membrane pass occupies residues 12 to 32 (LFFPMALILYDFAAYLSTDLI). Residues 33–48 (QPGIINVVRDFNADVS) are Periplasmic-facing. A helical transmembrane segment spans residues 49-69 (LAPAAVSLYLAGGMALQWLLG). Over 70–78 (PLSDRIGRK) the chain is Cytoplasmic. A helical membrane pass occupies residues 79-99 (PVLITGALIFTLACAATMFTT). Topologically, residues 100–103 (SMTQ) are periplasmic. Residues 104–124 (FLIARAIQGTSICFIATVGYV) traverse the membrane as a helical segment. Over 125–140 (TVQEAFGQTKGIKLMA) the chain is Cytoplasmic. A helical transmembrane segment spans residues 141-161 (IITSIVLIAPIIGPLSGAALM). Over 162–167 (HFVHWK) the chain is Periplasmic. A helical transmembrane segment spans residues 168 to 188 (VLFAIIAVMGFISFVGLLLAM). Residues 189-216 (PETVKRGAVPFSAKSVLRDFRNVFCNRL) are Cytoplasmic-facing. Residues 217 to 237 (FLFGAATISLSYIPMMSWVAV) form a helical membrane-spanning segment. The Periplasmic portion of the chain corresponds to 238–251 (SPVILIDAGGLTTS). A helical transmembrane segment spans residues 252-272 (QFAWTQVPVFGAVIVANAIVA). Residues 273-282 (RFVKDPTEPR) lie on the Cytoplasmic side of the membrane. The chain crosses the membrane as a helical span at residues 283–303 (FIWRAVPIQLVGLALLIIGNL). Residues 304-307 (LSPH) are Periplasmic-facing. The chain crosses the membrane as a helical span at residues 308–328 (VWLWSVLGTSLYAFGIGLIFP). The Cytoplasmic segment spans residues 329 to 348 (TLFRFTLFSNNLPKGTVSAS). The helical transmembrane segment at 349–369 (LNMVILMVMSVSVEIGRWLWF) threads the bilayer. Residues 370–373 (NGGR) lie on the Periplasmic side of the membrane. Residues 374–394 (LPFHLLAVVAGVIVVFTLAGL) form a helical membrane-spanning segment. The Cytoplasmic portion of the chain corresponds to 395–410 (LNRVRQHQAAELAEEQ).

The protein belongs to the major facilitator superfamily.

The protein localises to the cell inner membrane. Its function is as follows. Proton-dependent efflux pump. Confers resistance to a broad spectrum of chemically unrelated substrates. In Escherichia coli O157:H7, this protein is Multidrug resistance protein MdtM (mdtM).